A 214-amino-acid polypeptide reads, in one-letter code: Guanylate kinase (214 aa).

The Guanylate kinase-like domain occupies 6-192 (GTLYIISAPS…ALEDLKAIFR (187 aa)). 13 to 20 (APSGAGKT) serves as a coordination point for ATP.

This sequence belongs to the guanylate kinase family.

Its subcellular location is the cytoplasm. The catalysed reaction is GMP + ATP = GDP + ADP. Essential for recycling GMP and indirectly, cGMP. This chain is Guanylate kinase, found in Pseudomonas savastanoi pv. phaseolicola (strain 1448A / Race 6) (Pseudomonas syringae pv. phaseolicola (strain 1448A / Race 6)).